A 255-amino-acid chain; its full sequence is Formate hydrogenlyase subunit 7 (255 aa).

[4Fe-4S] cluster contacts are provided by C45, C51, C115, and C145.

The protein belongs to the complex I 20 kDa subunit family. As to quaternary structure, FHL comprises of a formate dehydrogenase, unidentified electron carriers and a hydrogenase (isoenzyme 3). In this non-energy conserving pathway molecular hydrogen and carbodioxide from formate are released. It depends on [4Fe-4S] cluster as a cofactor.

The chain is Formate hydrogenlyase subunit 7 (hycG) from Escherichia coli (strain K12).